The sequence spans 286 residues: Transcription factor bHLH11 (286 aa).

Residues 1-34 (MDQPMKPKTCSESDFADDSSASSSSSSGQNLRGA) are disordered. Residues 18–27 (DSSASSSSSS) show a composition bias toward low complexity. A bHLH domain is found at 44-94 (AVCSQKAEREKLRRDKLKEQFLELGNALDPNRPKSDKASVLTDTIQMLKDV). 2 disordered regions span residues 182–202 (EQQASVQQHSSSSADASMKQD) and 244–286 (QQDV…MLKP). 2 stretches are compositionally biased toward low complexity: residues 183 to 198 (QQASVQQHSSSSADAS) and 255 to 269 (SLTTTASSSNSYSLS). Positions 270 to 279 (QAVQDSSPGT) are enriched in polar residues.

In terms of assembly, homodimer. Expressed consitutively in roots, leaves, stems, and flowers.

Its subcellular location is the nucleus. This is Transcription factor bHLH11 (BHLH11) from Arabidopsis thaliana (Mouse-ear cress).